The chain runs to 217 residues: Large ribosomal subunit protein uL4 (217 aa).

Residues 46–102 form a disordered region; sequence KRQGTHSAKTRAEVSGGGRKPFRQKGTGRARQGSIRAPHFTGGGISHGPKPRDYSQR.

Belongs to the universal ribosomal protein uL4 family. Part of the 50S ribosomal subunit.

Functionally, one of the primary rRNA binding proteins, this protein initially binds near the 5'-end of the 23S rRNA. It is important during the early stages of 50S assembly. It makes multiple contacts with different domains of the 23S rRNA in the assembled 50S subunit and ribosome. In terms of biological role, forms part of the polypeptide exit tunnel. In Corynebacterium diphtheriae (strain ATCC 700971 / NCTC 13129 / Biotype gravis), this protein is Large ribosomal subunit protein uL4.